Here is a 255-residue protein sequence, read N- to C-terminus: Taurine import ATP-binding protein TauB (255 aa).

The ABC transporter domain occupies 2 to 229 (LQISHLYADY…RFVAGESSRS (228 aa)). 34 to 41 (GPSGCGKT) serves as a coordination point for ATP.

This sequence belongs to the ABC transporter superfamily. Taurine importer (TC 3.A.1.17.1) family. As to quaternary structure, the complex is composed of two ATP-binding proteins (TauB), two transmembrane proteins (TauC) and a solute-binding protein (TauA).

Its subcellular location is the cell inner membrane. The enzyme catalyses taurine(out) + ATP + H2O = taurine(in) + ADP + phosphate + H(+). Functionally, part of the ABC transporter complex TauABC involved in taurine import. Responsible for energy coupling to the transport system. The sequence is that of Taurine import ATP-binding protein TauB from Escherichia coli O6:H1 (strain CFT073 / ATCC 700928 / UPEC).